Consider the following 460-residue polypeptide: Ribosomal protein uS12 methylthiotransferase RimO (460 aa).

The region spanning 17–128 is the MTTase N-terminal domain; it reads PAVAVLHLGC…IVQVIQRAER (112 aa). The [4Fe-4S] cluster site is built by cysteine 26, cysteine 62, cysteine 91, cysteine 166, cysteine 170, and cysteine 173. Residues 152–381 enclose the Radical SAM core domain; it reads TTHAPVAYLR…MQLQQGIAFR (230 aa). A TRAM domain is found at 384 to 450; it reads REQVGQVVPV…PYDLFGQVVE (67 aa).

It belongs to the methylthiotransferase family. RimO subfamily. Requires [4Fe-4S] cluster as cofactor.

Its subcellular location is the cytoplasm. The catalysed reaction is L-aspartate(89)-[ribosomal protein uS12]-hydrogen + (sulfur carrier)-SH + AH2 + 2 S-adenosyl-L-methionine = 3-methylsulfanyl-L-aspartate(89)-[ribosomal protein uS12]-hydrogen + (sulfur carrier)-H + 5'-deoxyadenosine + L-methionine + A + S-adenosyl-L-homocysteine + 2 H(+). Its function is as follows. Catalyzes the methylthiolation of an aspartic acid residue of ribosomal protein uS12. This is Ribosomal protein uS12 methylthiotransferase RimO from Synechococcus sp. (strain JA-3-3Ab) (Cyanobacteria bacterium Yellowstone A-Prime).